The primary structure comprises 445 residues: Argininosuccinate synthase (445 aa).

Residues Ala-17 to Ser-25 and Ala-43 each bind ATP. Tyr-99 lines the L-citrulline pocket. The ATP site is built by Gly-129 and Thr-131. Residues Thr-131, Asn-135, and Asp-136 each contribute to the L-aspartate site. Asn-135 lines the L-citrulline pocket. Asp-136 serves as a coordination point for ATP. L-citrulline is bound by residues Arg-139 and Ser-192. ATP is bound at residue Asp-194. Positions 201, 203, and 280 each coordinate L-citrulline.

It belongs to the argininosuccinate synthase family. Type 2 subfamily. Homotetramer.

It localises to the cytoplasm. It catalyses the reaction L-citrulline + L-aspartate + ATP = 2-(N(omega)-L-arginino)succinate + AMP + diphosphate + H(+). It functions in the pathway amino-acid biosynthesis; L-arginine biosynthesis; L-arginine from L-ornithine and carbamoyl phosphate: step 2/3. The polypeptide is Argininosuccinate synthase (Bordetella petrii (strain ATCC BAA-461 / DSM 12804 / CCUG 43448)).